Consider the following 302-residue polypeptide: MTSRANATSPFKTVALVGRYSAANIAAPLLELASCIAARGHDIVFERETALNIGVQDYPALPPDEMARHADVAVVLGGDGTLLGIGRHLAGASVPVIGVNHGRLGFMTDIPFEDVHNVLPDMLAGQYEAETRSLLQAQVVRDDETIFSALAFNDVVVNRSGFSGMVELAVSVDGFFMYNQRSDGLIVSTPTGSTAYALSAGGPILHPALSGLVLVPIAPHALSNRPIVIPHDAEVVIQVTSGRDASVNFDMQSLTSLLPGDRIVVRRSERTVRLLHPVGYNYYATLRKKLHWHEYPTEDNRL.

Asp-79 (proton acceptor) is an active-site residue. Residues 79-80 (DG), 153-154 (ND), Arg-181, Asp-183, 194-199 (TAYALS), Ala-218, and Gln-252 contribute to the NAD(+) site.

The protein belongs to the NAD kinase family. It depends on a divalent metal cation as a cofactor.

Its subcellular location is the cytoplasm. The catalysed reaction is NAD(+) + ATP = ADP + NADP(+) + H(+). In terms of biological role, involved in the regulation of the intracellular balance of NAD and NADP, and is a key enzyme in the biosynthesis of NADP. Catalyzes specifically the phosphorylation on 2'-hydroxyl of the adenosine moiety of NAD to yield NADP. This chain is NAD kinase, found in Ralstonia nicotianae (strain ATCC BAA-1114 / GMI1000) (Ralstonia solanacearum).